Consider the following 620-residue polypeptide: MRYSLLFFIFLPCVITAVDLIHLHDGSPLFGEEVLSQTGKPLTRFLGIPFAEPPIGNLRFRKPKPKQPWRIPFNATTPPNSCIQSEDTYFGDFYGSTMWNPNTKLSEDCLYLNVYVPGKVDPNKKLAVMIWVYGGGFWSGTSTLDVYDGRILTVEENVILVAMNYRVSIFGFLYMNRSEAPGNMGMWDQLLAMKWVHKNIDLFGGDTSRITLFGESAGAASVSIHMLSQKSAPYFHRAIIQSGSATSPWAIEPRDVALARAVILYNAMKCGNMSLISPDYDRILDCFQRADADALRENEWAPVREFGDFPWVPVVDGDFLLENAQTSLKQGNFKKTQLLAGSNRDESIYFLTYQLPDIFPVADFFSKSEFIKDRQTWIKGVKDLLPRQILKCQLTLAAVLHEYEPQDLPISAQNWLNAMDKMLGDYHFTCSVNEMALAHTKHGGDTFYYYFTHRATQQTWPEWMGVLHGYEINFIFGEPFNQKRFNYTDEERELSNRFMRYWANFAKTGDPNKNEDGSFTQDIWPKYNSVSMEYMNMTVESSYPGQNRIGHGPRRKECAFWKAYLPNLMAAVADVGDPYLVWKQQMDKWQNEYITDWQYHFEQYKRYQTYRQSDSETCGG.

A signal peptide spans 1–31 (MRYSLLFFIFLPCVITAVDLIHLHDGSPLFG). N74 carries an N-linked (GlcNAc...) asparagine glycan. C82 and C109 form a disulfide bridge. S216 (acyl-ester intermediate) is an active-site residue. A disulfide bridge links C270 with C286. An N-linked (GlcNAc...) asparagine glycan is attached at N272. Active-site charge relay system residues include E346 and H468. C430 and C558 are oxidised to a cystine. N486 and N536 each carry an N-linked (GlcNAc...) asparagine glycan.

It belongs to the type-B carboxylesterase/lipase family. In terms of assembly, oligomer composed of disulfide-linked homodimers.

Its subcellular location is the synapse. The protein resides in the secreted. It is found in the cell membrane. The enzyme catalyses acetylcholine + H2O = choline + acetate + H(+). Its function is as follows. Rapidly hydrolyzes choline released into the synapse. In Caenorhabditis briggsae, this protein is Acetylcholinesterase 1 (ace-1).